We begin with the raw amino-acid sequence, 186 residues long: Ribosome-recycling factor (186 aa).

The protein belongs to the RRF family.

It is found in the cytoplasm. Its function is as follows. Responsible for the release of ribosomes from messenger RNA at the termination of protein biosynthesis. May increase the efficiency of translation by recycling ribosomes from one round of translation to another. In Rickettsia peacockii (strain Rustic), this protein is Ribosome-recycling factor.